Here is a 276-residue protein sequence, read N- to C-terminus: Putative pyruvate, phosphate dikinase regulatory protein 1 (276 aa).

150–157 (GLPRTSKT) provides a ligand contact to ADP.

The protein belongs to the pyruvate, phosphate/water dikinase regulatory protein family. PDRP subfamily.

The catalysed reaction is N(tele)-phospho-L-histidyl/L-threonyl-[pyruvate, phosphate dikinase] + ADP = N(tele)-phospho-L-histidyl/O-phospho-L-threonyl-[pyruvate, phosphate dikinase] + AMP + H(+). It catalyses the reaction N(tele)-phospho-L-histidyl/O-phospho-L-threonyl-[pyruvate, phosphate dikinase] + phosphate + H(+) = N(tele)-phospho-L-histidyl/L-threonyl-[pyruvate, phosphate dikinase] + diphosphate. Functionally, bifunctional serine/threonine kinase and phosphorylase involved in the regulation of the pyruvate, phosphate dikinase (PPDK) by catalyzing its phosphorylation/dephosphorylation. The sequence is that of Putative pyruvate, phosphate dikinase regulatory protein 1 from Syntrophomonas wolfei subsp. wolfei (strain DSM 2245B / Goettingen).